A 137-amino-acid chain; its full sequence is Large ribosomal subunit protein uL16 (137 aa).

It belongs to the universal ribosomal protein uL16 family. In terms of assembly, part of the 50S ribosomal subunit.

Functionally, binds 23S rRNA and is also seen to make contacts with the A and possibly P site tRNAs. This Mycoplasma mycoides subsp. mycoides SC (strain CCUG 32753 / NCTC 10114 / PG1) protein is Large ribosomal subunit protein uL16.